We begin with the raw amino-acid sequence, 392 residues long: 8-amino-7-oxononanoate synthase (392 aa).

Arg-19 contributes to the substrate binding site. 106 to 107 is a pyridoxal 5'-phosphate binding site; that stretch reads GY. Substrate is bound at residue His-131. Positions 176, 204, and 233 each coordinate pyridoxal 5'-phosphate. Lys-236 carries the post-translational modification N6-(pyridoxal phosphate)lysine. Thr-350 serves as a coordination point for substrate.

Belongs to the class-II pyridoxal-phosphate-dependent aminotransferase family. BioF subfamily. In terms of assembly, homodimer. It depends on pyridoxal 5'-phosphate as a cofactor.

It carries out the reaction 6-carboxyhexanoyl-[ACP] + L-alanine + H(+) = (8S)-8-amino-7-oxononanoate + holo-[ACP] + CO2. It functions in the pathway cofactor biosynthesis; biotin biosynthesis. Its function is as follows. Catalyzes the decarboxylative condensation of pimeloyl-[acyl-carrier protein] and L-alanine to produce 8-amino-7-oxononanoate (AON), [acyl-carrier protein], and carbon dioxide. The chain is 8-amino-7-oxononanoate synthase from Stutzerimonas stutzeri (strain A1501) (Pseudomonas stutzeri).